The following is a 418-amino-acid chain: STE20-related kinase adapter protein beta (418 aa).

Positions 58-369 constitute a Protein kinase domain; it reads YELQVEIGRG…ASSLLSHVFF (312 aa). ATP is bound by residues 64-72 and K89; that span reads IGRGFDNLT.

It belongs to the protein kinase superfamily. STE Ser/Thr protein kinase family. STE20 subfamily. Component of a trimeric complex composed of STK11/LKB1, STRAD (STRADA or STRADB) and CAB39/MO25 (CAB39/MO25alpha or CAB39L/MO25beta): the complex tethers STK11/LKB1 in the cytoplasm and stimulates its catalytic activity. Interacts with BIRC4/XIAP. These two proteins are likely to coexist in a complex with TAK1, TRAF6, TAB1 and TAB2. In terms of tissue distribution, highly expressed in heart, skeletal muscle, testis, liver and colon.

It is found in the nucleus. Its subcellular location is the cytoplasm. Pseudokinase which, in complex with CAB39/MO25 (CAB39/MO25alpha or CAB39L/MO25beta), binds to and activates STK11/LKB1. Adopts a closed conformation typical of active protein kinases and binds STK11/LKB1 as a pseudosubstrate, promoting conformational change of STK11/LKB1 in an active conformation. In Homo sapiens (Human), this protein is STE20-related kinase adapter protein beta (STRADB).